The chain runs to 57 residues: Large ribosomal subunit protein eL20 (57 aa).

The protein belongs to the eukaryotic ribosomal protein eL20 family. Part of the 50S ribosomal subunit. Binds 23S rRNA.

The chain is Large ribosomal subunit protein eL20 from Halorhabdus utahensis (strain DSM 12940 / JCM 11049 / AX-2).